A 592-amino-acid chain; its full sequence is A-type ATP synthase subunit A (592 aa).

Residue 236 to 243 (GPFGSGKT) coordinates ATP.

The protein belongs to the ATPase alpha/beta chains family. As to quaternary structure, has multiple subunits with at least A(3), B(3), C, D, E, F, H, I and proteolipid K(x).

The protein localises to the cell membrane. The enzyme catalyses ATP + H2O + 4 H(+)(in) = ADP + phosphate + 5 H(+)(out). In terms of biological role, component of the A-type ATP synthase that produces ATP from ADP in the presence of a proton gradient across the membrane. The A chain is the catalytic subunit. The polypeptide is A-type ATP synthase subunit A (Methanopyrus kandleri (strain AV19 / DSM 6324 / JCM 9639 / NBRC 100938)).